We begin with the raw amino-acid sequence, 453 residues long: Tubulin alpha chain (453 aa).

Q11 is a binding site for GTP. K40 carries the N6-acetyllysine modification. The GTP site is built by E71, G144, T145, T179, N206, and N228. E71 is a Mg(2+) binding site. E254 is an active-site residue.

This sequence belongs to the tubulin family. Dimer of alpha and beta chains. A typical microtubule is a hollow water-filled tube with an outer diameter of 25 nm and an inner diameter of 15 nM. Alpha-beta heterodimers associate head-to-tail to form protofilaments running lengthwise along the microtubule wall with the beta-tubulin subunit facing the microtubule plus end conferring a structural polarity. Microtubules usually have 13 protofilaments but different protofilament numbers can be found in some organisms and specialized cells. Mg(2+) serves as cofactor. In terms of processing, undergoes a tyrosination/detyrosination cycle, the cyclic removal and re-addition of a C-terminal tyrosine residue by the enzymes tubulin tyrosine carboxypeptidase (TTCP) and tubulin tyrosine ligase (TTL), respectively. Post-translationally, acetylation of alpha chains at Lys-40 stabilizes microtubules and affects affinity and processivity of microtubule motors. This modification has a role in multiple cellular functions, ranging from cell motility, cell cycle progression or cell differentiation to intracellular trafficking and signaling.

It localises to the cytoplasm. The protein localises to the cytoskeleton. The enzyme catalyses GTP + H2O = GDP + phosphate + H(+). Functionally, tubulin is the major constituent of microtubules, a cylinder consisting of laterally associated linear protofilaments composed of alpha- and beta-tubulin heterodimers. Microtubules grow by the addition of GTP-tubulin dimers to the microtubule end, where a stabilizing cap forms. Below the cap, tubulin dimers are in GDP-bound state, owing to GTPase activity of alpha-tubulin. The polypeptide is Tubulin alpha chain (Plasmodium falciparum (isolate K1 / Thailand)).